We begin with the raw amino-acid sequence, 287 residues long: 4-hydroxybenzoate octaprenyltransferase (287 aa).

6 helical membrane-spanning segments follow: residues 41 to 61 (WPLLVIFTLGTLLMRSAGCAM), 89 to 109 (WEAVAIAVGLSFIAFLLILPL), 133 to 153 (FFAIPQAYLGIAFGFGIPMAF), 158 to 178 (DTVPMLAWVMLVANIFWSVAY), 202 to 224 (FGRFDVAAVMACYAATLGIYVWI), and 266 to 286 (HNNWLGGVLFAGIAAHYLLAG).

It belongs to the UbiA prenyltransferase family. Mg(2+) is required as a cofactor.

It is found in the cell inner membrane. It catalyses the reaction all-trans-octaprenyl diphosphate + 4-hydroxybenzoate = 4-hydroxy-3-(all-trans-octaprenyl)benzoate + diphosphate. The protein operates within cofactor biosynthesis; ubiquinone biosynthesis. Functionally, catalyzes the prenylation of para-hydroxybenzoate (PHB) with an all-trans polyprenyl group. Mediates the second step in the final reaction sequence of ubiquinone-8 (UQ-8) biosynthesis, which is the condensation of the polyisoprenoid side chain with PHB, generating the first membrane-bound Q intermediate 3-octaprenyl-4-hydroxybenzoate. This chain is 4-hydroxybenzoate octaprenyltransferase, found in Burkholderia cenocepacia (strain HI2424).